Here is a 155-residue protein sequence, read N- to C-terminus: DNA gyrase inhibitor (155 aa).

Belongs to the DNA gyrase inhibitor family. Interacts with DNA gyrase.

The protein localises to the cytoplasm. In terms of biological role, inhibits the supercoiling activity of DNA gyrase. Acts by inhibiting DNA gyrase at an early step, prior to (or at the step of) binding of DNA by the gyrase. It protects cells against toxins that target DNA gyrase, by inhibiting activity of these toxins and reducing the formation of lethal double-strand breaks in the cell. In Erwinia billingiae (strain Eb661), this protein is DNA gyrase inhibitor.